A 513-amino-acid polypeptide reads, in one-letter code: Gluconokinase (513 aa).

Residues Lys16, Thr261, Gly300, and 412-416 (GFARS) each bind ATP.

It belongs to the FGGY kinase family.

It carries out the reaction D-gluconate + ATP = 6-phospho-D-gluconate + ADP + H(+). The protein operates within carbohydrate acid metabolism; D-gluconate degradation. Catabolite repression by gluconate. This is Gluconokinase (gntK) from Bacillus subtilis (strain 168).